The chain runs to 166 residues: Lipoprotein signal peptidase (166 aa).

The next 4 helical transmembrane spans lie at 10–30 (GGALAPWLGISLIVILFDQLT), 46–66 (LTPFFNLTLIYNRGAAFGFLA), 71–91 (WQRWAFTALGIGATLVICYLL), and 100–120 (FSLSLALILGGALGNVIDRLI). Active-site residues include Asp-126 and Asp-144. Residues 135–155 (WHWPAFNLADSAITVGAVLLI) form a helical membrane-spanning segment.

This sequence belongs to the peptidase A8 family.

It localises to the cell inner membrane. It catalyses the reaction Release of signal peptides from bacterial membrane prolipoproteins. Hydrolyzes -Xaa-Yaa-Zaa-|-(S,diacylglyceryl)Cys-, in which Xaa is hydrophobic (preferably Leu), and Yaa (Ala or Ser) and Zaa (Gly or Ala) have small, neutral side chains.. It participates in protein modification; lipoprotein biosynthesis (signal peptide cleavage). In terms of biological role, this protein specifically catalyzes the removal of signal peptides from prolipoproteins. In Burkholderia thailandensis (strain ATCC 700388 / DSM 13276 / CCUG 48851 / CIP 106301 / E264), this protein is Lipoprotein signal peptidase.